The following is a 202-amino-acid chain: Phosphatidyl-N-methylethanolamine N-methyltransferase (202 aa).

The Lumenal portion of the chain corresponds to 1–12 (MTTLSDYVDFSQ). Positions 13-33 (DSFKYAALSIAFNPIFWNVVA) form an intramembrane region, helical. The Lumenal segment spans residues 34-45 (RAEYRSHFLTRI). A helical transmembrane segment spans residues 46–66 (FGSPYRGCYFLAITIFSLGIL). The Cytoplasmic portion of the chain corresponds to 67-90 (RDHIYQQALEDQPYYAPVHQPVLG). Residues 91–111 (GALFAVGSVLVLSSMYALGVT) form a helical membrane-spanning segment. S-adenosyl-L-methionine is bound at residue 95 to 97 (AVG). The Lumenal portion of the chain corresponds to 112 to 154 (GTYLGDYFGILMDAPVTGFPFNVTGSPMYWGSTLNFLGVALYK). The chain crosses the membrane as a helical span at residues 155–175 (GKVAGILLTALVFVLYWFALK). Residues 176–202 (WEDPFTAEIYAKRERERAKSKRGGKNQ) lie on the Cytoplasmic side of the membrane. Residue 177 to 178 (ED) coordinates S-adenosyl-L-methionine.

This sequence belongs to the class VI-like SAM-binding methyltransferase superfamily. PEMT/PEM2 methyltransferase family.

The protein resides in the endoplasmic reticulum membrane. It localises to the mitochondrion membrane. The catalysed reaction is a 1,2-diacyl-sn-glycero-3-phospho-N-methylethanolamine + S-adenosyl-L-methionine = a 1,2-diacyl-sn-glycero-3-phospho-N,N-dimethylethanolamine + S-adenosyl-L-homocysteine + H(+). The enzyme catalyses a 1,2-diacyl-sn-glycero-3-phospho-N,N-dimethylethanolamine + S-adenosyl-L-methionine = a 1,2-diacyl-sn-glycero-3-phosphocholine + S-adenosyl-L-homocysteine + H(+). The protein operates within phospholipid metabolism; phosphatidylcholine biosynthesis. Functionally, catalyzes the second two steps of the methylation pathway of phosphatidylcholine biosynthesis, the SAM-dependent methylation of phosphatidylmonomethylethanolamine (PMME) to phosphatidyldimethylethanolamine (PDME) and of PDME to phosphatidylcholine (PC). The polypeptide is Phosphatidyl-N-methylethanolamine N-methyltransferase (Emericella nidulans (strain FGSC A4 / ATCC 38163 / CBS 112.46 / NRRL 194 / M139) (Aspergillus nidulans)).